The following is a 260-amino-acid chain: 5'-nucleotidase SurE (260 aa).

Residues D8, D9, S39, and N96 each coordinate a divalent metal cation.

It belongs to the SurE nucleotidase family. Requires a divalent metal cation as cofactor.

Its subcellular location is the cytoplasm. The enzyme catalyses a ribonucleoside 5'-phosphate + H2O = a ribonucleoside + phosphate. Nucleotidase that shows phosphatase activity on nucleoside 5'-monophosphates. This chain is 5'-nucleotidase SurE, found in Moorella thermoacetica (strain ATCC 39073 / JCM 9320).